The following is a 745-amino-acid chain: Serine/threonine-protein kinase GG21441 (745 aa).

Positions 49-73 (RNQQQNVQKDFDSHNRDCDSPVSST) are disordered. The span at 57 to 67 (KDFDSHNRDCD) shows a compositional bias: basic and acidic residues. Doublecortin domains lie at 159–245 (LRIK…VEYN) and 315–398 (RIVT…AEDF). A Protein kinase domain is found at 479–737 (YTLGRIIGDG…SEDILDHYWT (259 aa)). ATP is bound by residues 485-493 (IGDGNFAIV) and Lys-508. The active-site Proton acceptor is Asp-600.

It belongs to the protein kinase superfamily. CAMK Ser/Thr protein kinase family. CaMK subfamily.

The enzyme catalyses L-seryl-[protein] + ATP = O-phospho-L-seryl-[protein] + ADP + H(+). It catalyses the reaction L-threonyl-[protein] + ATP = O-phospho-L-threonyl-[protein] + ADP + H(+). This is Serine/threonine-protein kinase GG21441 from Drosophila erecta (Fruit fly).